The following is a 357-amino-acid chain: Probable nitronate monooxygenase (357 aa).

FMN contacts are provided by residues Asn71, Gln175, Gly180, Gly219, and 238-241; that span reads QMGT.

It belongs to the nitronate monooxygenase family. NMO class I subfamily. The cofactor is FMN.

It catalyses the reaction 3 propionate 3-nitronate + 3 O2 + H2O = 3 3-oxopropanoate + 2 nitrate + nitrite + H2O2 + 3 H(+). Nitronate monooxygenase that uses molecular oxygen to catalyze the oxidative denitrification of alkyl nitronates. Acts on propionate 3-nitronate (P3N), the presumed physiological substrate. Probably functions in the detoxification of P3N, a metabolic poison produced by plants and fungi as a defense mechanism. The sequence is that of Probable nitronate monooxygenase from Staphylococcus haemolyticus (strain JCSC1435).